The primary structure comprises 181 residues: Organ-specific protein S2 (181 aa).

4 tandem repeats follow at residues 59–84 (HAKE…DNEI), 85–110 (HAKE…DNEI), 111–136 (HANE…DNEI), and 137–162 (HANE…DNEI). The 4 X 26 AA tandem repeats stretch occupies residues 59 to 162 (HAKENMGAIG…NASAYGDNEI (104 aa)). Residues 94–181 (GEFEPRPNAS…PRPSMTKYNA (88 aa)) are disordered.

This sequence to organ specific protein P4. In terms of tissue distribution, expressed in stems.

The polypeptide is Organ-specific protein S2 (Pisum sativum (Garden pea)).